We begin with the raw amino-acid sequence, 141 residues long: Flagellar assembly factor FliW (141 aa).

This sequence belongs to the FliW family. In terms of assembly, interacts with translational regulator CsrA and flagellin(s).

It localises to the cytoplasm. Functionally, acts as an anti-CsrA protein, binds CsrA and prevents it from repressing translation of its target genes, one of which is flagellin. Binds to flagellin and participates in the assembly of the flagellum. This Clostridium acetobutylicum (strain ATCC 824 / DSM 792 / JCM 1419 / IAM 19013 / LMG 5710 / NBRC 13948 / NRRL B-527 / VKM B-1787 / 2291 / W) protein is Flagellar assembly factor FliW.